Here is a 79-residue protein sequence, read N- to C-terminus: Cell division protein ZapB (79 aa).

The stretch at 4–78 forms a coiled coil; sequence EVFEKLEAKV…LQALLGKMEE (75 aa).

This sequence belongs to the ZapB family. In terms of assembly, homodimer. The ends of the coiled-coil dimer bind to each other, forming polymers. Interacts with FtsZ.

The protein localises to the cytoplasm. Non-essential, abundant cell division factor that is required for proper Z-ring formation. It is recruited early to the divisome by direct interaction with FtsZ, stimulating Z-ring assembly and thereby promoting cell division earlier in the cell cycle. Its recruitment to the Z-ring requires functional FtsA or ZipA. The sequence is that of Cell division protein ZapB from Cronobacter sakazakii (strain ATCC BAA-894) (Enterobacter sakazakii).